A 146-amino-acid chain; its full sequence is Hemoglobin subunit beta (146 aa).

Val-1 bears the N-acetylvaline mark. Residues 2 to 146 (HLSAEEKAAV…VANALAHKYH (145 aa)) form the Globin domain. The residue at position 12 (Thr-12) is a Phosphothreonine. Ser-44 carries the phosphoserine modification. The residue at position 59 (Lys-59) is an N6-acetyllysine. His-63 contributes to the heme b binding site. Lys-82 is subject to N6-acetyllysine. Residue His-92 participates in heme b binding. An S-nitrosocysteine modification is found at Cys-93. An N6-acetyllysine modification is found at Lys-144.

It belongs to the globin family. In terms of assembly, heterotetramer of two alpha chains and two beta chains. As to expression, red blood cells.

Involved in oxygen transport from the lung to the various peripheral tissues. This Ctenodactylus gundi (Northern gundi) protein is Hemoglobin subunit beta (HBB).